Reading from the N-terminus, the 485-residue chain is Protein nucleotidyltransferase YdiU (485 aa).

ATP is bound by residues glycine 100, glycine 102, arginine 103, lysine 123, aspartate 135, glycine 136, arginine 189, and arginine 196. The active-site Proton acceptor is the aspartate 265. 2 residues coordinate Mg(2+): asparagine 266 and aspartate 275. An ATP-binding site is contributed by aspartate 275.

This sequence belongs to the SELO family. It depends on Mg(2+) as a cofactor. Requires Mn(2+) as cofactor.

The enzyme catalyses L-seryl-[protein] + ATP = 3-O-(5'-adenylyl)-L-seryl-[protein] + diphosphate. It catalyses the reaction L-threonyl-[protein] + ATP = 3-O-(5'-adenylyl)-L-threonyl-[protein] + diphosphate. The catalysed reaction is L-tyrosyl-[protein] + ATP = O-(5'-adenylyl)-L-tyrosyl-[protein] + diphosphate. It carries out the reaction L-histidyl-[protein] + UTP = N(tele)-(5'-uridylyl)-L-histidyl-[protein] + diphosphate. The enzyme catalyses L-seryl-[protein] + UTP = O-(5'-uridylyl)-L-seryl-[protein] + diphosphate. It catalyses the reaction L-tyrosyl-[protein] + UTP = O-(5'-uridylyl)-L-tyrosyl-[protein] + diphosphate. Its function is as follows. Nucleotidyltransferase involved in the post-translational modification of proteins. It can catalyze the addition of adenosine monophosphate (AMP) or uridine monophosphate (UMP) to a protein, resulting in modifications known as AMPylation and UMPylation. This is Protein nucleotidyltransferase YdiU from Trichormus variabilis (strain ATCC 29413 / PCC 7937) (Anabaena variabilis).